A 155-amino-acid chain; its full sequence is RNA pyrophosphohydrolase (155 aa).

The 143-residue stretch at 6-148 (GYRANVAIVL…KQEVYRKALT (143 aa)) folds into the Nudix hydrolase domain. The Nudix box motif lies at 38–59 (GGVDTGETPLQAMYRELHEEIG).

This sequence belongs to the Nudix hydrolase family. RppH subfamily. It depends on a divalent metal cation as a cofactor.

Accelerates the degradation of transcripts by removing pyrophosphate from the 5'-end of triphosphorylated RNA, leading to a more labile monophosphorylated state that can stimulate subsequent ribonuclease cleavage. The polypeptide is RNA pyrophosphohydrolase (Francisella tularensis subsp. mediasiatica (strain FSC147)).